The chain runs to 440 residues: L-gulonolactone oxidase (440 aa).

Residues 17–187 (YSCEPELYFE…LNVTIQCVPA (171 aa)) form the FAD-binding PCMH-type domain. Residue H54 is modified to Pros-8alpha-FAD histidine. A helical membrane pass occupies residues 245–267 (WFWNYAIGYYLLEFLLWISVFVP).

This sequence belongs to the oxygen-dependent FAD-linked oxidoreductase family. It depends on FAD as a cofactor.

The protein resides in the microsome membrane. It is found in the endoplasmic reticulum membrane. It carries out the reaction L-gulono-1,4-lactone + O2 = L-ascorbate + H2O2 + H(+). Its pathway is cofactor biosynthesis; L-ascorbate biosynthesis via UDP-alpha-D-glucuronate pathway; L-ascorbate from UDP-alpha-D-glucuronate: step 4/4. Functionally, oxidizes L-gulono-1,4-lactone to hydrogen peroxide and L-xylo-hexulonolactone which spontaneously isomerizes to L-ascorbate. This is L-gulonolactone oxidase (GULO) from Scyliorhinus torazame (Cloudy catshark).